Here is a 525-residue protein sequence, read N- to C-terminus: Lysine--tRNA ligase (525 aa).

Positions 430 and 437 each coordinate Mg(2+).

Belongs to the class-II aminoacyl-tRNA synthetase family. As to quaternary structure, homodimer. Requires Mg(2+) as cofactor.

It is found in the cytoplasm. The catalysed reaction is tRNA(Lys) + L-lysine + ATP = L-lysyl-tRNA(Lys) + AMP + diphosphate. The protein is Lysine--tRNA ligase of Chlamydia caviae (strain ATCC VR-813 / DSM 19441 / 03DC25 / GPIC) (Chlamydophila caviae).